The sequence spans 532 residues: Light-independent protochlorophyllide reductase subunit B (532 aa).

Asp36 lines the [4Fe-4S] cluster pocket. Asp318 (proton donor) is an active-site residue. 453–454 (GM) provides a ligand contact to substrate.

Belongs to the ChlB/BchB/BchZ family. As to quaternary structure, protochlorophyllide reductase is composed of three subunits; ChlL, ChlN and ChlB. Forms a heterotetramer of two ChlB and two ChlN subunits. Requires [4Fe-4S] cluster as cofactor.

The protein resides in the plastid. It is found in the chloroplast. The enzyme catalyses chlorophyllide a + oxidized 2[4Fe-4S]-[ferredoxin] + 2 ADP + 2 phosphate = protochlorophyllide a + reduced 2[4Fe-4S]-[ferredoxin] + 2 ATP + 2 H2O. It participates in porphyrin-containing compound metabolism; chlorophyll biosynthesis (light-independent). In terms of biological role, component of the dark-operative protochlorophyllide reductase (DPOR) that uses Mg-ATP and reduced ferredoxin to reduce ring D of protochlorophyllide (Pchlide) to form chlorophyllide a (Chlide). This reaction is light-independent. The NB-protein (ChlN-ChlB) is the catalytic component of the complex. In Tetradesmus obliquus (Green alga), this protein is Light-independent protochlorophyllide reductase subunit B.